The primary structure comprises 424 residues: Dihydroorotase (424 aa).

Positions 61 and 63 each coordinate Zn(2+). Substrate contacts are provided by residues 63–65 (HLR) and Asn95. Zn(2+)-binding residues include Asp153, His180, and His233. Asn279 contacts substrate. Asp306 serves as a coordination point for Zn(2+). Asp306 is a catalytic residue. Position 310 (His310) interacts with substrate.

Belongs to the metallo-dependent hydrolases superfamily. DHOase family. Class I DHOase subfamily. It depends on Zn(2+) as a cofactor.

It carries out the reaction (S)-dihydroorotate + H2O = N-carbamoyl-L-aspartate + H(+). Its pathway is pyrimidine metabolism; UMP biosynthesis via de novo pathway; (S)-dihydroorotate from bicarbonate: step 3/3. Functionally, catalyzes the reversible cyclization of carbamoyl aspartate to dihydroorotate. The chain is Dihydroorotase from Pelobacter propionicus (strain DSM 2379 / NBRC 103807 / OttBd1).